A 212-amino-acid polypeptide reads, in one-letter code: Peptide methionine sulfoxide reductase MsrA (212 aa).

The active site involves Cys51.

It belongs to the MsrA Met sulfoxide reductase family.

It catalyses the reaction L-methionyl-[protein] + [thioredoxin]-disulfide + H2O = L-methionyl-(S)-S-oxide-[protein] + [thioredoxin]-dithiol. The enzyme catalyses [thioredoxin]-disulfide + L-methionine + H2O = L-methionine (S)-S-oxide + [thioredoxin]-dithiol. Its function is as follows. Has an important function as a repair enzyme for proteins that have been inactivated by oxidation. Catalyzes the reversible oxidation-reduction of methionine sulfoxide in proteins to methionine. This is Peptide methionine sulfoxide reductase MsrA from Vibrio cholerae serotype O1 (strain ATCC 39541 / Classical Ogawa 395 / O395).